Reading from the N-terminus, the 160-residue chain is Aspartate carbamoyltransferase regulatory chain (160 aa).

Zn(2+) is bound by residues cysteine 110, cysteine 115, cysteine 140, and cysteine 143.

It belongs to the PyrI family. As to quaternary structure, contains catalytic and regulatory chains. Zn(2+) serves as cofactor.

In terms of biological role, involved in allosteric regulation of aspartate carbamoyltransferase. The polypeptide is Aspartate carbamoyltransferase regulatory chain (Hyperthermus butylicus (strain DSM 5456 / JCM 9403 / PLM1-5)).